We begin with the raw amino-acid sequence, 158 residues long: 2-C-methyl-D-erythritol 2,4-cyclodiphosphate synthase (158 aa).

A divalent metal cation-binding residues include aspartate 9 and histidine 11. Residues 9 to 11 (DVH) and 35 to 36 (HS) contribute to the 4-CDP-2-C-methyl-D-erythritol 2-phosphate site. Histidine 43 provides a ligand contact to a divalent metal cation. Residues 57 to 59 (DLG), 62 to 66 (FPDTD), 133 to 136 (TTTE), phenylalanine 140, and arginine 143 contribute to the 4-CDP-2-C-methyl-D-erythritol 2-phosphate site.

This sequence belongs to the IspF family. Homotrimer. A divalent metal cation serves as cofactor.

It carries out the reaction 4-CDP-2-C-methyl-D-erythritol 2-phosphate = 2-C-methyl-D-erythritol 2,4-cyclic diphosphate + CMP. Its pathway is isoprenoid biosynthesis; isopentenyl diphosphate biosynthesis via DXP pathway; isopentenyl diphosphate from 1-deoxy-D-xylulose 5-phosphate: step 4/6. Its function is as follows. Involved in the biosynthesis of isopentenyl diphosphate (IPP) and dimethylallyl diphosphate (DMAPP), two major building blocks of isoprenoid compounds. Catalyzes the conversion of 4-diphosphocytidyl-2-C-methyl-D-erythritol 2-phosphate (CDP-ME2P) to 2-C-methyl-D-erythritol 2,4-cyclodiphosphate (ME-CPP) with a corresponding release of cytidine 5-monophosphate (CMP). In Desulfitobacterium hafniense (strain DSM 10664 / DCB-2), this protein is 2-C-methyl-D-erythritol 2,4-cyclodiphosphate synthase.